A 317-amino-acid polypeptide reads, in one-letter code: Probable RuBisCO transcriptional regulator (317 aa).

Residues 6 to 63 (FTLDQLRILRAILIQGSFKKAATSLYISQPAVSSHVHNIEKQLNIQLFDRSHRNAQLT) form the HTH lysR-type domain. The segment at residues 23–42 (FKKAATSLYISQPAVSSHVH) is a DNA-binding region (H-T-H motif).

This sequence belongs to the LysR transcriptional regulatory family.

It is found in the plastid. The protein localises to the chloroplast. Functionally, trans-acting transcriptional regulator of RuBisCO genes (rbcL and rbcS) expression. The sequence is that of Probable RuBisCO transcriptional regulator (rbcR) from Cyanidium caldarium (Red alga).